We begin with the raw amino-acid sequence, 455 residues long: Ribosomal protein uS12 methylthiotransferase RimO (455 aa).

An MTTase N-terminal domain is found at 10–126 (RKVSMISLGC…ILELIEAHDR (117 aa)). 6 residues coordinate [4Fe-4S] cluster: cysteine 19, cysteine 55, cysteine 89, cysteine 164, cysteine 168, and cysteine 171. In terms of domain architecture, Radical SAM core spans 150–380 (SSPFYSTYVK…MKAQQRVSFR (231 aa)). The 69-residue stretch at 383–451 (RALIGRVEPV…EYDLIGEIVD (69 aa)) folds into the TRAM domain.

It belongs to the methylthiotransferase family. RimO subfamily. [4Fe-4S] cluster serves as cofactor.

The protein resides in the cytoplasm. It catalyses the reaction L-aspartate(89)-[ribosomal protein uS12]-hydrogen + (sulfur carrier)-SH + AH2 + 2 S-adenosyl-L-methionine = 3-methylsulfanyl-L-aspartate(89)-[ribosomal protein uS12]-hydrogen + (sulfur carrier)-H + 5'-deoxyadenosine + L-methionine + A + S-adenosyl-L-homocysteine + 2 H(+). Functionally, catalyzes the methylthiolation of an aspartic acid residue of ribosomal protein uS12. The protein is Ribosomal protein uS12 methylthiotransferase RimO of Syntrophotalea carbinolica (strain DSM 2380 / NBRC 103641 / GraBd1) (Pelobacter carbinolicus).